Reading from the N-terminus, the 543-residue chain is Ribonuclease Y (543 aa).

Residues isoleucine 4–tyrosine 24 traverse the membrane as a helical segment. In terms of domain architecture, KH spans threonine 233 to leucine 296. The HD domain occupies valine 359–alanine 452.

The protein belongs to the RNase Y family.

It is found in the cell membrane. Endoribonuclease that initiates mRNA decay. This Lactobacillus acidophilus (strain ATCC 700396 / NCK56 / N2 / NCFM) protein is Ribonuclease Y.